The following is a 341-amino-acid chain: Pyrophosphate--fructose 6-phosphate 1-phosphotransferase (341 aa).

Gly-10 contacts diphosphate. Position 103 (Glu-103) interacts with Mg(2+). Residues 125–127 (TID), Arg-162, 169–171 (MGR), Glu-221, Arg-265, and 271–274 (HTQR) contribute to the substrate site. Asp-127 (proton acceptor) is an active-site residue.

The protein belongs to the phosphofructokinase type A (PFKA) family. Mixed-substrate PFK group III subfamily. In terms of assembly, homotetramer. Requires Mg(2+) as cofactor.

The protein resides in the cytoplasm. It catalyses the reaction beta-D-fructose 6-phosphate + diphosphate = beta-D-fructose 1,6-bisphosphate + phosphate + H(+). It participates in carbohydrate degradation; glycolysis; D-glyceraldehyde 3-phosphate and glycerone phosphate from D-glucose: step 3/4. Non-allosteric. In terms of biological role, catalyzes the phosphorylation of D-fructose 6-phosphate, the first committing step of glycolysis. Uses inorganic phosphate (PPi) as phosphoryl donor instead of ATP like common ATP-dependent phosphofructokinases (ATP-PFKs), which renders the reaction reversible, and can thus function both in glycolysis and gluconeogenesis. Consistently, PPi-PFK can replace the enzymes of both the forward (ATP-PFK) and reverse (fructose-bisphosphatase (FBPase)) reactions. In Amycolatopsis methanolica, this protein is Pyrophosphate--fructose 6-phosphate 1-phosphotransferase.